A 178-amino-acid chain; its full sequence is Thioredoxin F1, chloroplastic (178 aa).

Positions 1 to 22 are disordered; sequence MPLSLRLSPSPTALSPTTGGFG. The N-terminal 57 residues, 1–57, are a transit peptide targeting the chloroplast; that stretch reads MPLSLRLSPSPTALSPTTGGFGPSRKQCRIPYSGVPTTKIGFCSLDSRKRGDSSVVR. The span at 7–18 shows a compositional bias: polar residues; it reads LSPSPTALSPTT. The region spanning 58–174 is the Thioredoxin domain; that stretch reads CSLETVNVSV…LVAAIETARS (117 aa). Active-site nucleophile residues include Cys99 and Cys102. Cys99 and Cys102 form a disulfide bridge. At Cys126 the chain carries S-glutathionyl cysteine; transient.

Belongs to the thioredoxin family. Plant F-type subfamily. Glutathionylation at Cys-126 decreases its ability to be reduced by ferredoxin-thioredoxin reductase and reduces its efficiency in activating target chloroplastic enzymes.

The protein resides in the plastid. It localises to the chloroplast stroma. In terms of biological role, thiol-disulfide oxidoreductase involved in the redox regulation of enzymes of both reductive pentose phosphate pathway (Calvin-Benson cycle) and oxidative pentose phosphate pathway. Under light or reducing conditions, activates in chloroplast the glyceraldehyde-3-phosphate dehydrogenase, the phosphoribulokinase and the fructose-1,6-bisphosphate phosphatase, and inhibits the glucose-6-phosphate dehydrogenase. This is Thioredoxin F1, chloroplastic from Arabidopsis thaliana (Mouse-ear cress).